Consider the following 378-residue polypeptide: Spermidine/putrescine import ATP-binding protein PotA (378 aa).

Residues 18–248 enclose the ABC transporter domain; sequence VQLAGIRKCF…PKNLFVAGFI (231 aa). 50–57 is a binding site for ATP; that stretch reads GPSGCGKT.

Belongs to the ABC transporter superfamily. Spermidine/putrescine importer (TC 3.A.1.11.1) family. In terms of assembly, the complex is composed of two ATP-binding proteins (PotA), two transmembrane proteins (PotB and PotC) and a solute-binding protein (PotD).

The protein localises to the cell inner membrane. It catalyses the reaction ATP + H2O + polyamine-[polyamine-binding protein]Side 1 = ADP + phosphate + polyamineSide 2 + [polyamine-binding protein]Side 1.. Functionally, part of the ABC transporter complex PotABCD involved in spermidine/putrescine import. Responsible for energy coupling to the transport system. In Shigella flexneri, this protein is Spermidine/putrescine import ATP-binding protein PotA.